The chain runs to 315 residues: Ribosomal RNA small subunit methyltransferase H (315 aa).

S-adenosyl-L-methionine is bound by residues 36–38 (GGH), aspartate 56, phenylalanine 80, aspartate 102, and glutamine 109.

The protein belongs to the methyltransferase superfamily. RsmH family.

The protein localises to the cytoplasm. The catalysed reaction is cytidine(1402) in 16S rRNA + S-adenosyl-L-methionine = N(4)-methylcytidine(1402) in 16S rRNA + S-adenosyl-L-homocysteine + H(+). In terms of biological role, specifically methylates the N4 position of cytidine in position 1402 (C1402) of 16S rRNA. In Proteus mirabilis (strain HI4320), this protein is Ribosomal RNA small subunit methyltransferase H.